A 185-amino-acid polypeptide reads, in one-letter code: CASP-like protein 5A1 (185 aa).

The Cytoplasmic segment spans residues 1–45 (MNVSHPAVHPVGVPPALGGHAVPPRMRMRVRMEYLVFQGMPLPGT). A helical transmembrane segment spans residues 46-66 (LGGLVLRLGQFCSALIAFSVM). The Extracellular portion of the chain corresponds to 67 to 76 (LSVRDFSVTA). A helical transmembrane segment spans residues 77-97 (FCYLVAATVLQCLWSLAMAVI). Residues 98–121 (DVYALLVKRSLRNPLLVSIFVVGD) lie on the Cytoplasmic side of the membrane. Residues 122 to 142 (GVTATLTFAAACASAGVIVLI) form a helical membrane-spanning segment. At 143 to 160 (GNDIAMCKDNPCANYEAA) the chain is on the extracellular side. A helical membrane pass occupies residues 161–181 (IIMAFLSWFMVSISFILTFWL). The Cytoplasmic segment spans residues 182 to 185 (LATL).

This sequence belongs to the Casparian strip membrane proteins (CASP) family. Homodimer and heterodimers.

The protein resides in the cell membrane. This Picea sitchensis (Sitka spruce) protein is CASP-like protein 5A1.